Here is a 486-residue protein sequence, read N- to C-terminus: Aspartyl/glutamyl-tRNA(Asn/Gln) amidotransferase subunit B (486 aa).

Belongs to the GatB/GatE family. GatB subfamily. Heterotrimer of A, B and C subunits.

It catalyses the reaction L-glutamyl-tRNA(Gln) + L-glutamine + ATP + H2O = L-glutaminyl-tRNA(Gln) + L-glutamate + ADP + phosphate + H(+). The enzyme catalyses L-aspartyl-tRNA(Asn) + L-glutamine + ATP + H2O = L-asparaginyl-tRNA(Asn) + L-glutamate + ADP + phosphate + 2 H(+). In terms of biological role, allows the formation of correctly charged Asn-tRNA(Asn) or Gln-tRNA(Gln) through the transamidation of misacylated Asp-tRNA(Asn) or Glu-tRNA(Gln) in organisms which lack either or both of asparaginyl-tRNA or glutaminyl-tRNA synthetases. The reaction takes place in the presence of glutamine and ATP through an activated phospho-Asp-tRNA(Asn) or phospho-Glu-tRNA(Gln). The chain is Aspartyl/glutamyl-tRNA(Asn/Gln) amidotransferase subunit B from Azoarcus sp. (strain BH72).